An 894-amino-acid polypeptide reads, in one-letter code: Bifunctional enzyme RhaA/RhaB (894 aa).

The tract at residues 1–465 (MGEYRLAVDI…TAFPVTYFLP (465 aa)) is rhamnulokinase. The tract at residues 466–894 (QRSESHVSSR…KRESEKAKQR (429 aa)) is L-rhamnose isomerase. The Mn(2+) site is built by H730, D762, and D764.

In the N-terminal section; belongs to the rhamnulokinase family. This sequence in the C-terminal section; belongs to the rhamnose isomerase family. Mn(2+) serves as cofactor.

The protein localises to the cytoplasm. The enzyme catalyses L-rhamnulose + ATP = L-rhamnulose 1-phosphate + ADP + H(+). It catalyses the reaction L-rhamnopyranose = L-rhamnulose. It functions in the pathway carbohydrate degradation; L-rhamnose degradation; glycerone phosphate from L-rhamnose: step 1/3. Its pathway is carbohydrate degradation; L-rhamnose degradation; glycerone phosphate from L-rhamnose: step 2/3. The protein is Bifunctional enzyme RhaA/RhaB (rhaAB) of Shouchella clausii (strain KSM-K16) (Alkalihalobacillus clausii).